We begin with the raw amino-acid sequence, 286 residues long: D-tagatose-1,6-bisphosphate aldolase subunit KbaY (286 aa).

D82 acts as the Proton donor in catalysis. Positions 83 and 180 each coordinate Zn(2+). G181 serves as a coordination point for dihydroxyacetone phosphate. H208 serves as a coordination point for Zn(2+). Dihydroxyacetone phosphate-binding positions include 209–211 (GAS) and 230–233 (NVAT).

The protein belongs to the class II fructose-bisphosphate aldolase family. TagBP aldolase KbaY subfamily. As to quaternary structure, homotetramer. Forms a complex with KbaZ. Zn(2+) serves as cofactor.

It catalyses the reaction D-tagatofuranose 1,6-bisphosphate = D-glyceraldehyde 3-phosphate + dihydroxyacetone phosphate. The protein operates within carbohydrate metabolism; D-tagatose 6-phosphate degradation; D-glyceraldehyde 3-phosphate and glycerone phosphate from D-tagatose 6-phosphate: step 2/2. Functionally, catalytic subunit of the tagatose-1,6-bisphosphate aldolase KbaYZ, which catalyzes the reversible aldol condensation of dihydroxyacetone phosphate (DHAP or glycerone-phosphate) with glyceraldehyde 3-phosphate (G3P) to produce tagatose 1,6-bisphosphate (TBP). Requires KbaZ subunit for full activity and stability. The protein is D-tagatose-1,6-bisphosphate aldolase subunit KbaY of Escherichia coli O7:K1 (strain IAI39 / ExPEC).